Reading from the N-terminus, the 64-residue chain is Beta sliding clamp (64 aa).

This sequence belongs to the beta sliding clamp family. Forms a ring-shaped head-to-tail homodimer around DNA which binds and tethers DNA polymerases and other proteins to the DNA. The DNA replisome complex has a single clamp-loading complex (3 tau and 1 each of delta, delta', psi and chi subunits) which binds 3 Pol III cores (1 core on the leading strand and 2 on the lagging strand) each with a beta sliding clamp dimer. Additional proteins in the replisome are other copies of gamma, psi and chi, Ssb, DNA helicase and RNA primase.

The protein localises to the cytoplasm. Its function is as follows. Confers DNA tethering and processivity to DNA polymerases and other proteins. Acts as a clamp, forming a ring around DNA (a reaction catalyzed by the clamp-loading complex) which diffuses in an ATP-independent manner freely and bidirectionally along dsDNA. Initially characterized for its ability to contact the catalytic subunit of DNA polymerase III (Pol III), a complex, multichain enzyme responsible for most of the replicative synthesis in bacteria; Pol III exhibits 3'-5' exonuclease proofreading activity. The beta chain is required for initiation of replication as well as for processivity of DNA replication. In Actinobacillus pleuropneumoniae (Haemophilus pleuropneumoniae), this protein is Beta sliding clamp (dnaN).